The sequence spans 512 residues: Perphorin-1 (512 aa).

The N-terminal stretch at Met-1–Ala-18 is a signal peptide. N-linked (GlcNAc...) asparagine glycans are attached at residues Asn-49, Asn-96, Asn-118, Asn-378, Asn-381, Asn-403, and Asn-476.

The protein localises to the secreted. It localises to the extracellular space. The protein resides in the extracellular matrix. May be involved in conversion of asexual males and females to the sexual pathway. This chain is Perphorin-1, found in Volvox carteri (Green alga).